We begin with the raw amino-acid sequence, 103 residues long: MAAVSLSVSTVTPLGDRVFVKVAEAEEKTAGGIILPDNAKEKPQVGEIVAVGPGKRNDDGSRQAPEVKIGDKVLYSKYAGTDIKLGNDDYVLLSEKDILAVVA.

It belongs to the GroES chaperonin family. Heptamer of 7 subunits arranged in a ring. Interacts with the chaperonin GroEL.

The protein localises to the cytoplasm. Functionally, together with the chaperonin GroEL, plays an essential role in assisting protein folding. The GroEL-GroES system forms a nano-cage that allows encapsulation of the non-native substrate proteins and provides a physical environment optimized to promote and accelerate protein folding. GroES binds to the apical surface of the GroEL ring, thereby capping the opening of the GroEL channel. The chain is Co-chaperonin GroES from Synechococcus elongatus (strain ATCC 33912 / PCC 7942 / FACHB-805) (Anacystis nidulans R2).